Consider the following 197-residue polypeptide: Peptide deformylase (197 aa).

Fe cation contacts are provided by C106 and H148. E149 is an active-site residue. Residue H152 participates in Fe cation binding.

The protein belongs to the polypeptide deformylase family. Fe(2+) is required as a cofactor.

It catalyses the reaction N-terminal N-formyl-L-methionyl-[peptide] + H2O = N-terminal L-methionyl-[peptide] + formate. Removes the formyl group from the N-terminal Met of newly synthesized proteins. Requires at least a dipeptide for an efficient rate of reaction. N-terminal L-methionine is a prerequisite for activity but the enzyme has broad specificity at other positions. This chain is Peptide deformylase, found in Mycolicibacterium vanbaalenii (strain DSM 7251 / JCM 13017 / BCRC 16820 / KCTC 9966 / NRRL B-24157 / PYR-1) (Mycobacterium vanbaalenii).